The primary structure comprises 300 residues: UDP-3-O-acyl-N-acetylglucosamine deacetylase (300 aa).

Residues H76, H235, and D239 each contribute to the Zn(2+) site. The active-site Proton donor is H262.

It belongs to the LpxC family. Requires Zn(2+) as cofactor.

It catalyses the reaction a UDP-3-O-[(3R)-3-hydroxyacyl]-N-acetyl-alpha-D-glucosamine + H2O = a UDP-3-O-[(3R)-3-hydroxyacyl]-alpha-D-glucosamine + acetate. It functions in the pathway glycolipid biosynthesis; lipid IV(A) biosynthesis; lipid IV(A) from (3R)-3-hydroxytetradecanoyl-[acyl-carrier-protein] and UDP-N-acetyl-alpha-D-glucosamine: step 2/6. Catalyzes the hydrolysis of UDP-3-O-myristoyl-N-acetylglucosamine to form UDP-3-O-myristoylglucosamine and acetate, the committed step in lipid A biosynthesis. This chain is UDP-3-O-acyl-N-acetylglucosamine deacetylase, found in Halorhodospira halophila (strain DSM 244 / SL1) (Ectothiorhodospira halophila (strain DSM 244 / SL1)).